The following is a 316-amino-acid chain: Olfactory receptor 2T11 (316 aa).

Residues 1–22 are Extracellular-facing; sequence MTNTSSSDFTLLGLLVNSEAAG. The N-linked (GlcNAc...) asparagine glycan is linked to Asn-3. A helical membrane pass occupies residues 23–46; that stretch reads IVFTVILAVFLGAVTANLVMIFLI. The Cytoplasmic segment spans residues 47-54; the sequence is QVDSRLHT. The helical transmembrane segment at 55 to 76 threads the bilayer; it reads PMYFLLSQLSIMDTLFICTTVP. Residues 77-97 lie on the Extracellular side of the membrane; sequence KLLADMVSKEKIISFVACGIQ. Cys-94 and Cys-186 are joined by a disulfide. The chain crosses the membrane as a helical span at residues 98–117; the sequence is IFLYLTMIGSEFFLLGLMAY. Over 118-136 the chain is Cytoplasmic; sequence DCYVAVCNPLRYPVLMNRK. A helical membrane pass occupies residues 137 to 155; it reads KCLLLAAGAWFGGSLDGFL. At 156–192 the chain is on the extracellular side; sequence LTPITMNVPYCGSRSINHFFCEIPAVLKLACADTSLY. A helical transmembrane segment spans residues 193 to 216; it reads ETLMYICCVLMLLIPISIISTSYS. The Cytoplasmic portion of the chain corresponds to 217 to 233; that stretch reads LILLTIHRMPSAEGRKK. A helical membrane pass occupies residues 234-256; the sequence is AFTTCSSHLTVVSIFYGAAFYTY. Residues 257–269 lie on the Extracellular side of the membrane; it reads VLPQSFHTPEQDK. A helical transmembrane segment spans residues 270–289; sequence VVSAFYTIVTPMLNPLIYSL. The Cytoplasmic portion of the chain corresponds to 290–316; it reads RNKDVIGAFKKVFACCSSAQKVATSDA.

The protein belongs to the G-protein coupled receptor 1 family.

Its subcellular location is the cell membrane. Functionally, odorant receptor. The sequence is that of Olfactory receptor 2T11 (OR2T11) from Homo sapiens (Human).